A 375-amino-acid chain; its full sequence is 4,4'-diaponeurosporenoate glycosyltransferase (375 aa).

A run of 4 helical transmembrane segments spans residues 7–23, 112–132, 280–300, and 333–353; these read LLHA…YLMY, ACYL…DADV, IMML…GLAL, and FSIL…LVYI.

Belongs to the glycosyltransferase 2 family. CrtQ subfamily.

It localises to the cell membrane. It functions in the pathway carotenoid biosynthesis; staphyloxanthin biosynthesis; staphyloxanthin from farnesyl diphosphate: step 4/5. Catalyzes the glycosylation of 4,4'-diaponeurosporenoate, i.e. the esterification of glucose at the C1'' position with the carboxyl group of 4,4'-diaponeurosporenic acid, to form glycosyl-4,4'-diaponeurosporenoate. This is a step in the biosynthesis of staphyloxanthin, an orange pigment present in most staphylococci strains. This chain is 4,4'-diaponeurosporenoate glycosyltransferase (crtQ), found in Staphylococcus haemolyticus (strain JCSC1435).